A 301-amino-acid polypeptide reads, in one-letter code: D-alanine--D-alanine ligase (301 aa).

Residues Lys99–Gln294 enclose the ATP-grasp domain. Ile126–Thr181 provides a ligand contact to ATP. 3 residues coordinate Mg(2+): Asp248, Glu261, and Asn263.

The protein belongs to the D-alanine--D-alanine ligase family. The cofactor is Mg(2+). It depends on Mn(2+) as a cofactor.

It localises to the cytoplasm. The catalysed reaction is 2 D-alanine + ATP = D-alanyl-D-alanine + ADP + phosphate + H(+). It functions in the pathway cell wall biogenesis; peptidoglycan biosynthesis. Cell wall formation. In Clostridium beijerinckii (strain ATCC 51743 / NCIMB 8052) (Clostridium acetobutylicum), this protein is D-alanine--D-alanine ligase.